We begin with the raw amino-acid sequence, 215 residues long: Transmembrane emp24 domain-containing protein 11 (215 aa).

The N-terminal stretch at 1-17 (MQIQTILLCFSFSFSAA) is a signal peptide. The Lumenal portion of the chain corresponds to 18 to 167 (FYFHAGEREE…ILKEQDYQRD (150 aa)). The GOLD domain maps to 27–125 (EKCIIEDIPS…KLRIHLDIRV (99 aa)). An N-linked (GlcNAc...) asparagine glycan is attached at Asn-105. Residues 136 to 171 (QAKDKVNEVTFKLQHLIEQVEQILKEQDYQRDREEN) adopt a coiled-coil conformation. The helical transmembrane segment at 168-185 (REENFRITSEDTNRNVLW) threads the bilayer. Residues 186 to 215 (WAFAQILIFISVGIFQMKHLKDFFIAKKLV) lie on the Cytoplasmic side of the membrane. The COPII vesicle coat-binding motif lies at 208–209 (FF). A COPI vesicle coat-binding motif is present at residues 208 to 215 (FFIAKKLV).

It belongs to the EMP24/GP25L family.

It localises to the endoplasmic reticulum membrane. Part of a complex whose function is to bind Ca(2+) to the ER membrane and thereby regulate the retention of ER resident proteins. This Mus musculus (Mouse) protein is Transmembrane emp24 domain-containing protein 11 (Tmed11).